We begin with the raw amino-acid sequence, 369 residues long: MKAKRIVFKVGTSSLTNADGSLSRAKVKEITRQLALLHEAGHELILVSSGAIAAGFSSLGFKKRPTKVVDKQASAAVGQGLLLEEYTTNLLLKQIISAQILLTQDDFADKRRYKNAHQALSVLLNRGAIPVINENDSVAIEELKVGDNDTLSAQVAAMVQADLLVLLTDVDGLYTANPSTNPDARRLEKIEKISSELIDIAGGAGTSNGTGGMLTKIKAATLATMSGVPVYICSSLKTDALLEAAEETKDGSLFLAQEKGLKTQKQWLAFYAKSQGEIYVDQGAADALRNKGKSLLVSGLVSVSGSFAYQDTVTVYEEGSGAILGKGRVRFGELALKDMLKSNKPKGVVIHRDDWISLTPELNDLFAEF.

K9 serves as a coordination point for ATP. Residues S49, D136, and N148 each contribute to the substrate site. ATP-binding positions include 168–169 (TD) and 210–216 (TGGMLTK). Positions 275–355 (QGEIYVDQGA…KGVVIHRDDW (81 aa)) constitute a PUA domain.

The protein belongs to the glutamate 5-kinase family.

The protein resides in the cytoplasm. The catalysed reaction is L-glutamate + ATP = L-glutamyl 5-phosphate + ADP. It participates in amino-acid biosynthesis; L-proline biosynthesis; L-glutamate 5-semialdehyde from L-glutamate: step 1/2. In terms of biological role, catalyzes the transfer of a phosphate group to glutamate to form L-glutamate 5-phosphate. The polypeptide is Glutamate 5-kinase (Streptococcus gordonii (strain Challis / ATCC 35105 / BCRC 15272 / CH1 / DL1 / V288)).